Here is a 359-residue protein sequence, read N- to C-terminus: Dihydroorotate dehydrogenase (quinone) (359 aa).

FMN is bound by residues 68-72 (AGFDK) and Ala92. Position 72 (Lys72) interacts with substrate. Substrate is bound at residue 117–121 (NAYGF). The FMN site is built by Asn146 and Asn179. Asn179 contributes to the substrate binding site. The Nucleophile role is filled by Ser182. Residue Asn184 coordinates substrate. FMN is bound by residues Lys215 and Thr243. 244–245 (NT) provides a ligand contact to substrate. FMN-binding positions include Gly263, Gly292, and 313 to 314 (YT).

The protein belongs to the dihydroorotate dehydrogenase family. Type 2 subfamily. Monomer. Requires FMN as cofactor.

Its subcellular location is the cell membrane. The enzyme catalyses (S)-dihydroorotate + a quinone = orotate + a quinol. It participates in pyrimidine metabolism; UMP biosynthesis via de novo pathway; orotate from (S)-dihydroorotate (quinone route): step 1/1. In terms of biological role, catalyzes the conversion of dihydroorotate to orotate with quinone as electron acceptor. This is Dihydroorotate dehydrogenase (quinone) from Nautilia profundicola (strain ATCC BAA-1463 / DSM 18972 / AmH).